The sequence spans 325 residues: MENTTQLLLRQSDALAGRNVLVVDANDPALKTLSVDATVHVHADDYTIGAQQWAPAPTVPAGTDLLVLPLSKSLDRLRFLLNWLAGEIAEPTELWLIGPTKGGIRGALKYLEAHVDGTMLEDSARHCKLYSGLLQPGEKQSLNAWGTVLEVADQEAVSYPGVFSHGRLDEGSALLLQAMEGHNLGKPGKVIDMGCGAGVISVWLARHGWQVQGVDVSASAVTASTESLARNGLQGRIMGGDLFSPIQGRVDMVVTNPPFHDRRQRTTDITRRLIAEAPTYLKPGGVLWLVANRELPYVQWLDDAFSHVQVASETTRFRVYRAVLS.

This sequence belongs to the methyltransferase superfamily. RsmC family. Monomer.

It is found in the cytoplasm. It carries out the reaction guanosine(1207) in 16S rRNA + S-adenosyl-L-methionine = N(2)-methylguanosine(1207) in 16S rRNA + S-adenosyl-L-homocysteine + H(+). Specifically methylates the guanine in position 1207 of 16S rRNA in the 30S particle. The protein is Ribosomal RNA small subunit methyltransferase C of Alcanivorax borkumensis (strain ATCC 700651 / DSM 11573 / NCIMB 13689 / SK2).